Here is a 63-residue protein sequence, read N- to C-terminus: Bowman-birk type proteinase inhibitor 2 (63 aa).

7 cysteine pairs are disulfide-bonded: C7–C61, C8–C23, C11–C57, C13–C21, C31–C38, C35–C50, and C40–C48.

The protein belongs to the Bowman-Birk serine protease inhibitor family. In terms of assembly, exists as a dimer in its native form.

Inhibits trypsin, chymotrypsin, plasmin and factor XIIa. Does not inhibit factor Xa, thrombin, human plasma kallikrein, porcine pancreatic kallikrein and human urinary kallikrein. This chain is Bowman-birk type proteinase inhibitor 2, found in Amburana cearensis (Cerejeira).